Here is a 241-residue protein sequence, read N- to C-terminus: Terpene cyclase olcD (241 aa).

Transmembrane regions (helical) follow at residues 19–39 (LSDI…FATI), 49–71 (WMPL…LYPP), 76–95 (ILGF…LRFA), 108–128 (YLPV…LALI), 137–157 (FYYG…SGLV), 166–186 (SYTI…GLFF), and 202–222 (LMRW…VQFW).

This sequence belongs to the paxB family.

It is found in the membrane. The protein operates within secondary metabolite biosynthesis; terpenoid biosynthesis. Its function is as follows. Terpene cyclase; part of the gene cluster that mediates the biosynthesis of 15-deoxyoxalicine B. The first step of the pathway is the synthesis of nicotinyl-CoA from nicotinic acid by the nicotinic acid-CoA ligase olcI. Nicotinyl-CoA is then a substrate of polyketide synthase olcA to produce 4-hydroxy-6-(3-pyridinyl)-2H-pyran-2-one (HPPO) which is further prenylated by the polyprenyl transferase olcH to yield geranylgeranyl-HPPO. Geranylgeranyl pyrophosphate is provided by the cluster-specific geranylgeranyl pyrophosphate synthase olcC. The FAD-dependent monooxygenase olcE catalyzes the epoxidation of geranylgeranyl-HPPO and the terpene cyclase olcD catalyzes the cyclization of the terpenoid component, resulting in the formation of the tricyclic terpene moiety seen in predecaturin E. The cytochrome P450 monooxygenase then catalyzes the allylic oxidation of predecaturin E, which is followed by spirocylization with concomitant loss of one molecule of water to form decaturin E. Decaturin E is the substrate of the cytochrome P450 monooxygenase olcJ which hydroxylates it at the C-29 position to form decaturin F. The short-chain dehydrogenase/reductase olcF may catalyze the oxidation of decaturin F to generate the 29-hydroxyl-27-one intermediate, and subsequent hemiacetal formation probably leads to the formation of decaturin C. The dioxygenase olcK may be a peroxisomal enzyme that catalyzes the hydroxylation of decaturin C into decaturin A once decaturin C is shuttled into the peroxisome by the MFS transporter olcL. Finally the cytochrome P450 monooxygenase olcB catalyzes the oxidative rearrangement to yield 15-deoxyoxalicine B. In the absence of olcJ, decaturin E may be shunted to a pathway in which it is oxidized to a ketone, possibly by olcF, to form decaturin D, which undergoes further allylic oxidation to yield decaturin G. Moreover, in the absence of oclK or oclL, oclB can convert decaturin C into 15-deoxyoxalicine A. This chain is Terpene cyclase olcD, found in Penicillium canescens.